The sequence spans 73 residues: Probable cytochrome b-c1 complex subunit 8 (73 aa).

The Mitochondrial matrix portion of the chain corresponds to 1–42 (MGQASKVFGKQITYSVSPFQQKLFVNYFKNAIPHLRRGVKDN). A helical membrane pass occupies residues 43–60 (FFCSVPYFAALYITVNWA). Over 61-73 (NETYHNEMKDHWY) the chain is Mitochondrial intermembrane.

This sequence belongs to the UQCRQ/QCR8 family. As to quaternary structure, component of the ubiquinol-cytochrome c oxidoreductase (cytochrome b-c1 complex, complex III, CIII), a multisubunit enzyme composed of 3 respiratory subunits cytochrome b, cytochrome c1 and Rieske protein, 2 core protein subunits, and additional low-molecular weight protein subunits. The complex exists as an obligatory dimer and forms supercomplexes (SCs) in the inner mitochondrial membrane with cytochrome c oxidase (complex IV, CIV).

It is found in the mitochondrion inner membrane. Its function is as follows. Component of the ubiquinol-cytochrome c oxidoreductase, a multisubunit transmembrane complex that is part of the mitochondrial electron transport chain which drives oxidative phosphorylation. The respiratory chain contains 3 multisubunit complexes succinate dehydrogenase (complex II, CII), ubiquinol-cytochrome c oxidoreductase (cytochrome b-c1 complex, complex III, CIII) and cytochrome c oxidase (complex IV, CIV), that cooperate to transfer electrons derived from NADH and succinate to molecular oxygen, creating an electrochemical gradient over the inner membrane that drives transmembrane transport and the ATP synthase. The cytochrome b-c1 complex catalyzes electron transfer from ubiquinol to cytochrome c, linking this redox reaction to translocation of protons across the mitochondrial inner membrane, with protons being carried across the membrane as hydrogens on the quinol. In the process called Q cycle, 2 protons are consumed from the matrix, 4 protons are released into the intermembrane space and 2 electrons are passed to cytochrome c. The protein is Probable cytochrome b-c1 complex subunit 8 of Dictyostelium discoideum (Social amoeba).